Consider the following 309-residue polypeptide: Porphobilinogen deaminase (309 aa).

S-(dipyrrolylmethanemethyl)cysteine is present on Cys244.

The protein belongs to the HMBS family. In terms of assembly, monomer. The cofactor is dipyrromethane.

It carries out the reaction 4 porphobilinogen + H2O = hydroxymethylbilane + 4 NH4(+). The protein operates within porphyrin-containing compound metabolism; protoporphyrin-IX biosynthesis; coproporphyrinogen-III from 5-aminolevulinate: step 2/4. Functionally, tetrapolymerization of the monopyrrole PBG into the hydroxymethylbilane pre-uroporphyrinogen in several discrete steps. This is Porphobilinogen deaminase from Rhizobium meliloti (strain 1021) (Ensifer meliloti).